The sequence spans 248 residues: tRNA1(Val) (adenine(37)-N6)-methyltransferase (248 aa).

Belongs to the methyltransferase superfamily. tRNA (adenine-N(6)-)-methyltransferase family.

It localises to the cytoplasm. It carries out the reaction adenosine(37) in tRNA1(Val) + S-adenosyl-L-methionine = N(6)-methyladenosine(37) in tRNA1(Val) + S-adenosyl-L-homocysteine + H(+). Its function is as follows. Specifically methylates the adenine in position 37 of tRNA(1)(Val) (anticodon cmo5UAC). The protein is tRNA1(Val) (adenine(37)-N6)-methyltransferase of Pectobacterium carotovorum subsp. carotovorum (strain PC1).